The chain runs to 364 residues: Medium-wave-sensitive opsin 1 (364 aa).

A disordered region spans residues 1-23 (MTQPWGPQMLAGGQPPESHEDST). Over 1 to 52 (MTQPWGPQMLAGGQPPESHEDSTQASIFTYTNSNSTRGPFEGPNFHIAPRWV) the chain is Extracellular. The required for 11-cis-retinal regeneration stretch occupies residues 17-43 (ESHEDSTQASIFTYTNSNSTRGPFEGP). Asn-34 carries an N-linked (GlcNAc...) asparagine glycan. A helical membrane pass occupies residues 53-77 (YHLTSAWMILVVIASVFTNGLVLVA). Topologically, residues 78-89 (TMRFKKLRHPLN) are cytoplasmic. A helical transmembrane segment spans residues 90-115 (WILVNLAVADLAETVIASTISVVNQF). Residues 116–129 (YGYFVLGHPLCVVE) are Extracellular-facing. Cysteines 126 and 203 form a disulfide. A helical membrane pass occupies residues 130 to 149 (GYTVSLCGITGLWSLAIISW). Residues 150 to 168 (ERWLVVCKPFGNVRFDAKL) lie on the Cytoplasmic side of the membrane. Residues 169–192 (AIAGIAFSWIWAAVWTAPPIFGWS) traverse the membrane as a helical segment. Over 193–218 (RYWPYGLKTSCGPDVFSGTSYPGVQS) the chain is Extracellular. The helical transmembrane segment at 219–246 (YMMVLMVTCCIIPLSVIVLCYLQVWMAI) threads the bilayer. The Cytoplasmic portion of the chain corresponds to 247–268 (RTVAKQQKESESTQKAEKEVTR). Residues 269–292 (MVVVMVFAYCLCWGPYTFFACFAT) traverse the membrane as a helical segment. Topologically, residues 293–300 (AHPGYSFH) are extracellular. The chain crosses the membrane as a helical span at residues 301 to 325 (PLVAAIPSYFAKSATIYNPIIYVFM). Residue Lys-312 is modified to N6-(retinylidene)lysine. The Cytoplasmic portion of the chain corresponds to 326-364 (NRQFRNCILQLFGKKVEDSSELSSASRTEASSVSSVSPA).

Belongs to the G-protein coupled receptor 1 family. Opsin subfamily. In terms of assembly, monomer. Homodimer. Homotetramer. In terms of processing, O-glycosylated. Phosphorylated on some or all of the serine and threonine residues present in the C-terminal region. In terms of tissue distribution, expressed in cone photoreceptor cells.

It is found in the membrane. Functionally, visual pigments are the light-absorbing molecules that mediate vision. They consist of an apoprotein, opsin, covalently linked to cis-retinal. May increase spectral sensitivity in dim light. The polypeptide is Medium-wave-sensitive opsin 1 (OPN1MW) (Oryctolagus cuniculus (Rabbit)).